Consider the following 337-residue polypeptide: tRNA N6-adenosine threonylcarbamoyltransferase (337 aa).

Positions 111 and 115 each coordinate Fe cation. Substrate is bound by residues 134 to 138 (LVSGG), Asp167, Gly180, and Asn272. Position 300 (Asp300) interacts with Fe cation.

It belongs to the KAE1 / TsaD family. Requires Fe(2+) as cofactor.

It is found in the cytoplasm. The enzyme catalyses L-threonylcarbamoyladenylate + adenosine(37) in tRNA = N(6)-L-threonylcarbamoyladenosine(37) in tRNA + AMP + H(+). Its function is as follows. Required for the formation of a threonylcarbamoyl group on adenosine at position 37 (t(6)A37) in tRNAs that read codons beginning with adenine. Is involved in the transfer of the threonylcarbamoyl moiety of threonylcarbamoyl-AMP (TC-AMP) to the N6 group of A37, together with TsaE and TsaB. TsaD likely plays a direct catalytic role in this reaction. The chain is tRNA N6-adenosine threonylcarbamoyltransferase from Escherichia coli O157:H7.